Here is a 351-residue protein sequence, read N- to C-terminus: DNA polymerase IV (351 aa).

The region spanning 4–185 (IIHVDMDCFF…LPLEKIPGVG (182 aa)) is the UmuC domain. Mg(2+)-binding residues include D8 and D103. E104 is an active-site residue.

Belongs to the DNA polymerase type-Y family. As to quaternary structure, monomer. Mg(2+) serves as cofactor.

The protein localises to the cytoplasm. It catalyses the reaction DNA(n) + a 2'-deoxyribonucleoside 5'-triphosphate = DNA(n+1) + diphosphate. Functionally, poorly processive, error-prone DNA polymerase involved in untargeted mutagenesis. Copies undamaged DNA at stalled replication forks, which arise in vivo from mismatched or misaligned primer ends. These misaligned primers can be extended by PolIV. Exhibits no 3'-5' exonuclease (proofreading) activity. May be involved in translesional synthesis, in conjunction with the beta clamp from PolIII. The polypeptide is DNA polymerase IV (Shigella flexneri).